We begin with the raw amino-acid sequence, 463 residues long: Major capsid protein (463 aa).

Residues 1-24 constitute a propeptide that is removed on maturation; that stretch reads MTIEKNLSDVQQKYADQFQEDVVK.

The protein resides in the virion. Assembles to form an icosahedral capsid. This chain is Major capsid protein, found in Staphylococcus phage K.